Here is a 296-residue protein sequence, read N- to C-terminus: 4-hydroxy-tetrahydrodipicolinate synthase (296 aa).

Threonine 50 provides a ligand contact to pyruvate. The active-site Proton donor/acceptor is the tyrosine 138. Lysine 166 functions as the Schiff-base intermediate with substrate in the catalytic mechanism. Position 208 (isoleucine 208) interacts with pyruvate.

The protein belongs to the DapA family. Homotetramer; dimer of dimers.

The protein resides in the cytoplasm. It catalyses the reaction L-aspartate 4-semialdehyde + pyruvate = (2S,4S)-4-hydroxy-2,3,4,5-tetrahydrodipicolinate + H2O + H(+). Its pathway is amino-acid biosynthesis; L-lysine biosynthesis via DAP pathway; (S)-tetrahydrodipicolinate from L-aspartate: step 3/4. Functionally, catalyzes the condensation of (S)-aspartate-beta-semialdehyde [(S)-ASA] and pyruvate to 4-hydroxy-tetrahydrodipicolinate (HTPA). The protein is 4-hydroxy-tetrahydrodipicolinate synthase of Thiobacillus denitrificans (strain ATCC 25259 / T1).